A 709-amino-acid polypeptide reads, in one-letter code: Mucin-20 (709 aa).

Residues 1-25 (MGCLWGLALPLFFFCWEVGVSGSSA) form the signal peptide. A compositionally biased stretch (polar residues) spans 57–69 (TQTLSAETSSRAS). 2 disordered regions span residues 57 to 92 (TQTLSAETSSRASTPAGPIPEAETRGAKRISPARET) and 170 to 403 (KGLS…WSPG). Basic and acidic residues predominate over residues 78-92 (AETRGAKRISPARET). Low complexity-rich tracts occupy residues 173 to 182 (SSESSASSDS), 190 to 199 (SRASESSASS), 209 to 218 (SRASESSASS), 228 to 237 (SRASESSASS), 247 to 256 (SRASESSASS), 266 to 275 (SRASESSASS), 285 to 294 (SRASESSASS), 304 to 313 (SRASESSASS), 323 to 332 (SRASESSASS), 342 to 351 (SRASESSASS), 361 to 370 (SRASESSASS), and 380 to 389 (SRASESSASS). 11 consecutive repeat copies span residues 173–192 (SSESSASSDSPHPVITPSRA), 193–211 (SESSASSDGPHPVITPSRA), 212–230 (SESSASSDGPHPVITPSRA), 231–249 (SESSASSDGPHPVITPSRA), 250–268 (SESSASSDGPHPVITPSRA), 269–287 (SESSASSDGPHPVITPSRA), 288–306 (SESSASSDGPHPVITPSRA), 307–325 (SESSASSDGPHPVITPSRA), 326–344 (SESSASSDGPHPVITPSRA), 345–363 (SESSASSDGLHPVITPSRA), and 364–382 (SESSASSDGPHPVITPSRA). Residues 173–400 (SSESSASSDS…GPHPVITPSW (228 aa)) form a 12 X 20 AA approximate tandem repeats of S-S-E-S-S-A-S-S-D-S-P-H-P-V-I-T-P-S-R-A region. The 12; approximate repeat unit spans residues 383 to 400 (SESSASSDGPHPVITPSW). Residue Asn423 is glycosylated (N-linked (GlcNAc...) asparagine). Disordered stretches follow at residues 434–515 (SSIP…APGA) and 583–657 (NFTP…VSAG). Positions 450 to 656 (VKASSTSDPP…RTRPTTDVSA (207 aa)) are involved in oligomerization. The span at 474–489 (VTASAETLSTAGTTES) shows a compositional bias: polar residues. A compositionally biased stretch (low complexity) spans 613-652 (TTTNSSRGTNSTLAKITTSAKTTMKPPTATPTTARTRPTT). N-linked (GlcNAc...) asparagine glycans are attached at residues Asn616 and Asn622. The interval 657 to 709 (GENGGFLLLRLSVASPEDLTDPRVAERLMQQLHRELHAHAPHFQVSLLRVRRG) is interaction with MET.

As to quaternary structure, interacts with MET; oligomerization increases affinity for MET. Highly expressed in kidney, moderately in placenta, lung, prostate, liver, and digestive system. In the kidney, localized in the proximal tubules but not in the glomerulus or distal tubules. Detected in most of the male urogenital tract epithelia, with the exception of epididymis.

Its subcellular location is the secreted. It localises to the apical cell membrane. It is found in the basolateral cell membrane. The protein localises to the cell projection. The protein resides in the microvillus membrane. Its function is as follows. May regulate MET signaling cascade. Seems to decrease hepatocyte growth factor (HGF)-induced transient MAPK activation. Blocks GRB2 recruitment to MET thus suppressing the GRB2-RAS pathway. Inhibits HGF-induced proliferation of MMP1 and MMP9 expression. The chain is Mucin-20 (MUC20) from Homo sapiens (Human).